Consider the following 123-residue polypeptide: Large ribosomal subunit protein bL12 (123 aa).

The protein belongs to the bacterial ribosomal protein bL12 family. In terms of assembly, homodimer. Part of the ribosomal stalk of the 50S ribosomal subunit. Forms a multimeric L10(L12)X complex, where L10 forms an elongated spine to which 2 to 4 L12 dimers bind in a sequential fashion. Binds GTP-bound translation factors.

Its function is as follows. Forms part of the ribosomal stalk which helps the ribosome interact with GTP-bound translation factors. Is thus essential for accurate translation. This Rhodopseudomonas palustris (strain BisB5) protein is Large ribosomal subunit protein bL12.